The chain runs to 292 residues: Histamine N-methyltransferase (292 aa).

Glu28 contacts substrate. Gly60, Glu89, Gln94, Ser120, and Ile142 together coordinate S-adenosyl-L-methionine. Asn283 is a substrate binding site.

This sequence belongs to the class I-like SAM-binding methyltransferase superfamily. HNMT family. In terms of assembly, monomer.

Its subcellular location is the cytoplasm. The catalysed reaction is histamine + S-adenosyl-L-methionine = N(tau)-methylhistamine + S-adenosyl-L-homocysteine + H(+). Its function is as follows. Inactivates histamine by N-methylation. Plays an important role in degrading histamine and in regulating the airway response to histamine. This chain is Histamine N-methyltransferase (HNMT), found in Pongo abelii (Sumatran orangutan).